The sequence spans 390 residues: Trehalose-phosphate phosphatase (390 aa).

Asp-150 serves as the catalytic Nucleophile. Mg(2+)-binding residues include Asp-150, Asp-152, and Asp-333. Asp-150 to Asp-152 serves as a coordination point for substrate.

This sequence belongs to the trehalose phosphatase family. The cofactor is Mg(2+).

It carries out the reaction alpha,alpha-trehalose 6-phosphate + H2O = alpha,alpha-trehalose + phosphate. It participates in glycan biosynthesis; trehalose biosynthesis. Functionally, removes the phosphate from trehalose 6-phosphate to produce free trehalose. The chain is Trehalose-phosphate phosphatase (otsB) from Mycobacterium marinum (strain ATCC BAA-535 / M).